The primary structure comprises 653 residues: Fidgetin-like protein 2 (653 aa).

3 disordered regions span residues 1-36, 86-129, and 216-240; these read MHWT…ELPP, ASFL…SGAL, and YGAL…APTP. The span at 10–27 shows a compositional bias: polar residues; the sequence is PLNQWPEQHLDVSSTTPS. The span at 97–107 shows a compositional bias: pro residues; it reads EPWPGPEPPYP. Positions 119–129 are enriched in gly residues; it reads KSGGGGGSGAL. Residues 219–240 show a composition bias toward pro residues; sequence LPPPPGPPPAPYLTPGLPAPTP. ATP contacts are provided by residues alanine 395 and 435–440; that span reads GAGKAL.

It belongs to the AAA ATPase family. Requires Mg(2+) as cofactor.

It localises to the cytoplasm. It is found in the cell cortex. The enzyme catalyses ATP + H2O = ADP + phosphate + H(+). Microtubule-severing enzyme that negatively regulates cell migration and wound healing. In migrating cells, targets dynamic microtubules (MTs) at the leading edge and severs them, thereby suppressing motility. Microtubule severing releases ARHGEF2 which activates RHOA, which in turn regulates focal ahesion turnover via focal adhesion kinase, as opposed to F-actin polymerization, to suppress cell motility. Negative regulator of axon regeneration that suppresses axonal growth by selectively severing dynamic MTs in the distal axon shaft and growth cone. Contributes to proper cell branching during endothelial and neuronal development. This chain is Fidgetin-like protein 2, found in Homo sapiens (Human).